We begin with the raw amino-acid sequence, 760 residues long: Molybdenum cofactor sulfurase 2 (760 aa).

An N6-(pyridoxal phosphate)lysine modification is found at K223. The active site involves C389. The 151-residue stretch at 608-758 folds into the MOSC domain; the sequence is QSDDEARTLR…LHCGSPLQVV (151 aa).

The protein belongs to the class-V pyridoxal-phosphate-dependent aminotransferase family. MOCOS subfamily. Requires pyridoxal 5'-phosphate as cofactor.

It catalyses the reaction Mo-molybdopterin + L-cysteine + AH2 = thio-Mo-molybdopterin + L-alanine + A + H2O. Sulfurates the molybdenum cofactor. Sulfation of molybdenum is essential for xanthine dehydrogenase (XDH) and aldehyde oxidase (ADO) enzymes in which molybdenum cofactor is liganded by 1 oxygen and 1 sulfur atom in active form. This Culex quinquefasciatus (Southern house mosquito) protein is Molybdenum cofactor sulfurase 2.